Here is a 447-residue protein sequence, read N- to C-terminus: GTPase Der (447 aa).

EngA-type G domains follow at residues tyrosine 2–glutamate 166 and isoleucine 183–tryptophan 358. GTP-binding positions include glycine 8–serine 15, aspartate 55–tyrosine 59, asparagine 118–aspartate 121, glycine 189–serine 196, aspartate 236–leucine 240, and asparagine 301–aspartate 304. Residues lysine 359 to glutamate 443 form the KH-like domain.

This sequence belongs to the TRAFAC class TrmE-Era-EngA-EngB-Septin-like GTPase superfamily. EngA (Der) GTPase family. In terms of assembly, associates with the 50S ribosomal subunit.

Its function is as follows. GTPase that plays an essential role in the late steps of ribosome biogenesis. The sequence is that of GTPase Der from Persephonella marina (strain DSM 14350 / EX-H1).